The following is a 1280-amino-acid chain: Pullulanase A (1280 aa).

The first 44 residues, 1-44, serve as a signal peptide directing secretion; sequence MRKTPSHTEKKMVYSIRSLKNGTGSVLIGASLVLLAMATPTISS. The segment at 42–132 is disordered; it reads ISSDESTPTT…VTTETKAEEP (91 aa). Positions 48–61 are enriched in low complexity; it reads TPTTNEPNNRNTTT. Residues 79–90 show a composition bias toward polar residues; the sequence is DISSPGNANASL. Residues 115-126 are compositionally biased toward low complexity; the sequence is EPTTSTSPVTTE. Substrate is bound by residues 156-158, tryptophan 168, aspartate 214, 263-265, tryptophan 276, lysine 318, and asparagine 323; these read WTW and WYW. Residues serine 661 and tyrosine 663 each coordinate Ca(2+). Residues 667-668 and phenylalanine 743 each bind substrate; that span reads YD. Residue aspartate 778 is the Nucleophile of the active site. Glutamate 807 acts as the Proton donor in catalysis. Tryptophan 809 lines the substrate pocket. Residues methionine 828, threonine 831, and aspartate 832 each coordinate Ca(2+). Aspartate 839, arginine 842, and tyrosine 849 together coordinate substrate. Ca(2+) is bound by residues aspartate 882 and aspartate 886. Substrate-binding positions include asparagine 896, lysine 969, and 989 to 991; that span reads DSY. Aspartate 992 is a Ca(2+) binding site. The tract at residues 1140–1248 is disordered; it reads VSQNGTSHES…TPDKQAELPN (109 aa). The segment covering 1149–1196 has biased composition (basic and acidic residues); the sequence is STAEEKPDSTPSKPEHQNEASHPAHQDPAPEARPDSTKPDAKVADAEN. Positions 1205 to 1218 are enriched in low complexity; sequence SQAEQPAQEAQASS. Positions 1246 to 1250 match the LPXTG sorting signal motif; that stretch reads LPNTG. Threonine 1249 carries the pentaglycyl murein peptidoglycan amidated threonine modification. A propeptide spans 1250 to 1280 (removed by sortase); that stretch reads GIKNENKLLFAGISLLALLGLGFLLKNKKEN.

This sequence belongs to the glycosyl hydrolase 13 family.

Its subcellular location is the secreted. The protein localises to the cell wall. It is found in the cell surface. It carries out the reaction Hydrolysis of (1-&gt;6)-alpha-D-glucosidic linkages in pullulan, amylopectin and glycogen, and in the alpha- and beta-limit dextrins of amylopectin and glycogen.. Its activity is regulated as follows. Inhibited by 4-O-alpha-D-glucopyranosylmoranoline (G1M). Functionally, virulence factor. Involved in the degradation of glycogen of the mammalian host cells. Hydrolyzes the alpha-1,6-branchpoints of glycogen. Hydrolyzes pullulan. Does not hydrolyze dextran. Binds to mouse lung alveolar type II cells that are rich in glycogen stores. Is an alpha-glucan-specific carbohydrate-binding protein, which binds to amylose (pure alpha-(1,4)-linked glucose), amylopectin (alpha-(1,4)-linked glucose with alpha-(1,6) branch points), pullulan (linear polymer of mixed alpha-(1,4)- and alpha-(1,6)-linked glucose) and glycogen (similar to amylopectin with more frequent alpha-(1,6) branch points) in vitro. Does not bind to dextran (a linear polymer of alpha-(1,6)-linked glucose). In Streptococcus pneumoniae serotype 4 (strain ATCC BAA-334 / TIGR4), this protein is Pullulanase A.